The following is an 80-amino-acid chain: MAGREGGRRQRRTKRKVCTFCAEKSEAIDYKDINKLRKFVTERGKILPRRISGNCAKHQRELTRAIKRARNIALLPFTTE.

The protein belongs to the bacterial ribosomal protein bS18 family. In terms of assembly, part of the 30S ribosomal subunit. Forms a tight heterodimer with protein bS6.

Binds as a heterodimer with protein bS6 to the central domain of the 16S rRNA, where it helps stabilize the platform of the 30S subunit. This is Small ribosomal subunit protein bS18 from Clostridium botulinum (strain 657 / Type Ba4).